The primary structure comprises 113 residues: Dolichyl-diphosphooligosaccharide--protein glycosyltransferase subunit DAD1 (113 aa).

Ser2 carries the post-translational modification N-acetylserine. Residues 2-30 lie on the Cytoplasmic side of the membrane; sequence SASVVSVISRFLEEYLSSTPQRLKLLDAY. Residues 31–51 form a helical membrane-spanning segment; the sequence is LLYILLTGALQFGYCLLVGTF. Position 52 (Pro52) is a topological domain, lumenal. The chain crosses the membrane as a helical span at residues 53-73; the sequence is FNSFLSGFISCVGSFILAVRL. The Cytoplasmic portion of the chain corresponds to 74–92; the sequence is RIQINPQNKADFQGISPER. A helical membrane pass occupies residues 93–113; it reads AFADFLFASTILHLVVMNFVG.

The protein belongs to the DAD/OST2 family. As to quaternary structure, component of the oligosaccharyltransferase (OST) complex. OST exists in two different complex forms which contain common core subunits RPN1, RPN2, OST48, OST4, DAD1 and TMEM258, either STT3A or STT3B as catalytic subunits, and form-specific accessory subunits. STT3A complex assembly occurs through the formation of 3 subcomplexes. Subcomplex 1 contains RPN1 and TMEM258, subcomplex 2 contains the STT3A-specific subunits STT3A, DC2/OSTC, and KCP2 as well as the core subunit OST4, and subcomplex 3 contains RPN2, DAD1, and OST48. The STT3A complex can form stable complexes with the Sec61 complex or with both the Sec61 and TRAP complexes.

The protein resides in the endoplasmic reticulum membrane. Its pathway is protein modification; protein glycosylation. In terms of biological role, subunit of the oligosaccharyl transferase (OST) complex that catalyzes the initial transfer of a defined glycan (Glc(3)Man(9)GlcNAc(2) in eukaryotes) from the lipid carrier dolichol-pyrophosphate to an asparagine residue within an Asn-X-Ser/Thr consensus motif in nascent polypeptide chains, the first step in protein N-glycosylation. N-glycosylation occurs cotranslationally and the complex associates with the Sec61 complex at the channel-forming translocon complex that mediates protein translocation across the endoplasmic reticulum (ER). All subunits are required for a maximal enzyme activity. The sequence is that of Dolichyl-diphosphooligosaccharide--protein glycosyltransferase subunit DAD1 from Pongo abelii (Sumatran orangutan).